A 479-amino-acid polypeptide reads, in one-letter code: Envelope glycoprotein C homolog (479 aa).

The signal sequence occupies residues 1–22 (MASLARAMLALLALYAAAIAAA). Residues 23-451 (PSTTTALDTT…SVSWPVVSSM (429 aa)) are Virion surface-facing. The segment at 26–96 (TTALDTTPNG…RVHGDKATAH (71 aa)) is disordered. N-linked (GlcNAc...) asparagine; by host glycosylation is present at Asn40. Positions 48–57 (PSPPPTPAPA) are enriched in pro residues. The segment at 75–82 (SRRKPPRN) is HDB1. Over residues 75–87 (SRRKPPRNNNRTR) the composition is skewed to basic residues. A glycan (N-linked (GlcNAc...) asparagine; by host) is linked at Asn84. The HDB2 stretch occupies residues 95–101 (AHGRKRI). The cysteines at positions 103 and 120 are disulfide-linked. Residues 135 to 140 (YRRGRF) form an HDB3 region. 6 N-linked (GlcNAc...) asparagine; by host glycosylation sites follow: Asn169, Asn192, Asn220, Asn228, Asn285, and Asn302. 3 disulfide bridges follow: Cys256–Cys326, Cys365–Cys418, and Cys369–Cys392. Residues 452 to 472 (IVVIAGIGILAIVLVIMATCV) traverse the membrane as a helical segment. The Cytoplasmic segment spans residues 473 to 479 (YYRQAGP).

This sequence belongs to the herpesviridae glycoprotein C family. Interacts with host complement component C3; this interaction inhibits host immune response by disregulating complement cascade.

The protein resides in the virion membrane. Its function is as follows. Essential for the initial attachment to heparan sulfate moieties of the host cell surface proteoglycans. Plays also a role in host immune evasion by inhibiting the host complement cascade activation. This is Envelope glycoprotein C homolog (gC) from Suid herpesvirus 1 (strain Indiana-Funkhauser / Becker) (SuHV-1).